The sequence spans 335 residues: Nucleoid-associated protein YejK (335 aa).

Belongs to the YejK family.

The protein resides in the cytoplasm. Its subcellular location is the nucleoid. The polypeptide is Nucleoid-associated protein YejK (Shigella dysenteriae serotype 1 (strain Sd197)).